The following is a 446-amino-acid chain: Tubulin beta-6 chain (446 aa).

The GTP site is built by Gln11, Glu69, Ser138, Gly142, Thr143, Gly144, Asn204, and Asn226. Glu69 is a binding site for Mg(2+). Residues 426-446 (QDATADEEEYEDEEEVQADDM) are disordered. Over residues 429-446 (TADEEEYEDEEEVQADDM) the composition is skewed to acidic residues.

Belongs to the tubulin family. In terms of assembly, dimer of alpha and beta chains. A typical microtubule is a hollow water-filled tube with an outer diameter of 25 nm and an inner diameter of 15 nM. Alpha-beta heterodimers associate head-to-tail to form protofilaments running lengthwise along the microtubule wall with the beta-tubulin subunit facing the microtubule plus end conferring a structural polarity. Microtubules usually have 13 protofilaments but different protofilament numbers can be found in some organisms and specialized cells. Mg(2+) serves as cofactor.

Its subcellular location is the cytoplasm. The protein resides in the cytoskeleton. Functionally, tubulin is the major constituent of microtubules, a cylinder consisting of laterally associated linear protofilaments composed of alpha- and beta-tubulin heterodimers. Microtubules grow by the addition of GTP-tubulin dimers to the microtubule end, where a stabilizing cap forms. Below the cap, tubulin dimers are in GDP-bound state, owing to GTPase activity of alpha-tubulin. The sequence is that of Tubulin beta-6 chain (TUBB6) from Zea mays (Maize).